Here is a 126-residue protein sequence, read N- to C-terminus: Aspartate 1-decarboxylase (126 aa).

The Schiff-base intermediate with substrate; via pyruvic acid role is filled by Ser25. Residue Ser25 is modified to Pyruvic acid (Ser). Residue Thr57 coordinates substrate. The active-site Proton donor is Tyr58. 73–75 (GAA) is a substrate binding site.

This sequence belongs to the PanD family. In terms of assembly, heterooctamer of four alpha and four beta subunits. Requires pyruvate as cofactor. Is synthesized initially as an inactive proenzyme, which is activated by self-cleavage at a specific serine bond to produce a beta-subunit with a hydroxyl group at its C-terminus and an alpha-subunit with a pyruvoyl group at its N-terminus.

Its subcellular location is the cytoplasm. It carries out the reaction L-aspartate + H(+) = beta-alanine + CO2. The protein operates within cofactor biosynthesis; (R)-pantothenate biosynthesis; beta-alanine from L-aspartate: step 1/1. Functionally, catalyzes the pyruvoyl-dependent decarboxylation of aspartate to produce beta-alanine. The protein is Aspartate 1-decarboxylase of Alcanivorax borkumensis (strain ATCC 700651 / DSM 11573 / NCIMB 13689 / SK2).